The sequence spans 92 residues: Large ribosomal subunit protein eL43 (92 aa).

4 residues coordinate Zn(2+): Cys-39, Cys-42, Cys-57, and Cys-60.

The protein belongs to the eukaryotic ribosomal protein eL43 family. As to quaternary structure, component of the large ribosomal subunit. Mature ribosomes consist of a small (40S) and a large (60S) subunit. The 40S subunit contains 32 different proteins and 1 molecule of RNA (18S). The 60S subunit contains 45 different proteins and 3 molecules of RNA (25S, 5.8S and 5S). It depends on Zn(2+) as a cofactor.

It is found in the cytoplasm. Its function is as follows. Component of the ribosome, a large ribonucleoprotein complex responsible for the synthesis of proteins in the cell. The small ribosomal subunit (SSU) binds messenger RNAs (mRNAs) and translates the encoded message by selecting cognate aminoacyl-transfer RNA (tRNA) molecules. The large subunit (LSU) contains the ribosomal catalytic site termed the peptidyl transferase center (PTC), which catalyzes the formation of peptide bonds, thereby polymerizing the amino acids delivered by tRNAs into a polypeptide chain. The nascent polypeptides leave the ribosome through a tunnel in the LSU and interact with protein factors that function in enzymatic processing, targeting, and the membrane insertion of nascent chains at the exit of the ribosomal tunnel. In Candida albicans (strain SC5314 / ATCC MYA-2876) (Yeast), this protein is Large ribosomal subunit protein eL43.